The primary structure comprises 305 residues: UDP-3-O-acyl-N-acetylglucosamine deacetylase (305 aa).

3 residues coordinate Zn(2+): His79, His238, and Asp242. Catalysis depends on His265, which acts as the Proton donor.

It belongs to the LpxC family. The cofactor is Zn(2+).

The catalysed reaction is a UDP-3-O-[(3R)-3-hydroxyacyl]-N-acetyl-alpha-D-glucosamine + H2O = a UDP-3-O-[(3R)-3-hydroxyacyl]-alpha-D-glucosamine + acetate. It participates in glycolipid biosynthesis; lipid IV(A) biosynthesis; lipid IV(A) from (3R)-3-hydroxytetradecanoyl-[acyl-carrier-protein] and UDP-N-acetyl-alpha-D-glucosamine: step 2/6. In terms of biological role, catalyzes the hydrolysis of UDP-3-O-myristoyl-N-acetylglucosamine to form UDP-3-O-myristoylglucosamine and acetate, the committed step in lipid A biosynthesis. The protein is UDP-3-O-acyl-N-acetylglucosamine deacetylase of Shewanella woodyi (strain ATCC 51908 / MS32).